Consider the following 365-residue polypeptide: 2-aminoethylphosphonate--pyruvate transaminase (365 aa).

Position 194 is an N6-(pyridoxal phosphate)lysine (Lys-194).

It belongs to the class-V pyridoxal-phosphate-dependent aminotransferase family. PhnW subfamily. Homodimer. Requires pyridoxal 5'-phosphate as cofactor.

The catalysed reaction is (2-aminoethyl)phosphonate + pyruvate = phosphonoacetaldehyde + L-alanine. Functionally, involved in phosphonate degradation. In Bacillus cereus (strain AH187), this protein is 2-aminoethylphosphonate--pyruvate transaminase.